Reading from the N-terminus, the 189-residue chain is Bilin-binding protein (189 aa).

Positions 1 to 15 (MQYLIVLALVAAASA) are cleaved as a signal peptide. Cystine bridges form between Cys23–Cys130 and Cys57–Cys185.

The protein belongs to the calycin superfamily. Lipocalin family. Homotetramer. In terms of tissue distribution, hemolymph.

Its subcellular location is the secreted. Its function is as follows. This protein binds the blue pigments bilins. The chain is Bilin-binding protein from Pieris brassicae (White butterfly).